We begin with the raw amino-acid sequence, 122 residues long: Basic phospholipase A2 PL-X (122 aa).

Disulfide bonds link Cys-26–Cys-115, Cys-28–Cys-44, Cys-43–Cys-95, Cys-49–Cys-122, Cys-50–Cys-88, Cys-57–Cys-81, and Cys-75–Cys-86. Ca(2+) is bound by residues Tyr-27, Gly-29, and Gly-31. His-47 is an active-site residue. Asp-48 contributes to the Ca(2+) binding site. Asp-89 is a catalytic residue.

It belongs to the phospholipase A2 family. Group II subfamily. D49 sub-subfamily. Requires Ca(2+) as cofactor. Expressed by the venom gland.

The protein localises to the secreted. The catalysed reaction is a 1,2-diacyl-sn-glycero-3-phosphocholine + H2O = a 1-acyl-sn-glycero-3-phosphocholine + a fatty acid + H(+). Its function is as follows. PLA2 catalyzes the calcium-dependent hydrolysis of the 2-acyl groups in 3-sn-phosphoglycerides. The polypeptide is Basic phospholipase A2 PL-X (Protobothrops flavoviridis (Habu)).